Here is a 434-residue protein sequence, read N- to C-terminus: Nicotinate phosphoribosyltransferase (434 aa).

His242 carries the post-translational modification Phosphohistidine; by autocatalysis.

This sequence belongs to the NAPRTase family. Transiently phosphorylated on a His residue during the reaction cycle. Phosphorylation strongly increases the affinity for substrates and increases the rate of nicotinate D-ribonucleotide production. Dephosphorylation regenerates the low-affinity form of the enzyme, leading to product release.

The enzyme catalyses nicotinate + 5-phospho-alpha-D-ribose 1-diphosphate + ATP + H2O = nicotinate beta-D-ribonucleotide + ADP + phosphate + diphosphate. It participates in cofactor biosynthesis; NAD(+) biosynthesis; nicotinate D-ribonucleotide from nicotinate: step 1/1. Functionally, catalyzes the synthesis of beta-nicotinate D-ribonucleotide from nicotinate and 5-phospho-D-ribose 1-phosphate at the expense of ATP. This is Nicotinate phosphoribosyltransferase from Rhizobium etli (strain ATCC 51251 / DSM 11541 / JCM 21823 / NBRC 15573 / CFN 42).